The sequence spans 327 residues: tRNA uridine(34) hydroxylase (327 aa).

Positions 122–218 (QENRCLVLDV…YGLKMGTGKW (97 aa)) constitute a Rhodanese domain. C178 serves as the catalytic Cysteine persulfide intermediate.

The protein belongs to the TrhO family.

The enzyme catalyses uridine(34) in tRNA + AH2 + O2 = 5-hydroxyuridine(34) in tRNA + A + H2O. Functionally, catalyzes oxygen-dependent 5-hydroxyuridine (ho5U) modification at position 34 in tRNAs. This is tRNA uridine(34) hydroxylase from Chlamydia trachomatis serovar A (strain ATCC VR-571B / DSM 19440 / HAR-13).